A 110-amino-acid chain; its full sequence is Methionine-R-sulfoxide reductase B1-A (110 aa).

Residues 1–104 (MSFCSFSGGE…FSSSLKFIPK (104 aa)) form the MsrB domain. Zn(2+) is bound by residues Cys-23, Cys-26, Cys-69, and Cys-72. Catalysis depends on Sec-93, which acts as the Nucleophile. Sec-93 is a non-standard amino acid (selenocysteine).

It belongs to the MsrB Met sulfoxide reductase family. Requires Zn(2+) as cofactor. As to expression, in the embryo, expressed in the polster, paraxial mesoderm, tectum, otic vesicle and liver.

The protein resides in the cytoplasm. It localises to the nucleus. It is found in the cytoskeleton. It carries out the reaction L-methionyl-[protein] + [thioredoxin]-disulfide + H2O = L-methionyl-(R)-S-oxide-[protein] + [thioredoxin]-dithiol. The enzyme catalyses [thioredoxin]-disulfide + L-methionine + H2O = L-methionine (R)-S-oxide + [thioredoxin]-dithiol. Methionine-sulfoxide reductase that specifically reduces methionine (R)-sulfoxide back to methionine. While in many cases, methionine oxidation is the result of random oxidation following oxidative stress, methionine oxidation is also a post-translational modification that takes place on specific residue. Acts as a regulator of actin assembly by reducing methionine (R)-sulfoxide mediated by MICALs (mical1, mical2 or mical3) on actin, thereby promoting filament repolymerization. Plays a role in innate immunity by reducing oxidized actin, leading to actin repolymerization in macrophages. The protein is Methionine-R-sulfoxide reductase B1-A (msrb1) of Danio rerio (Zebrafish).